Reading from the N-terminus, the 255-residue chain is Small ribosomal subunit protein uS2 (255 aa).

The protein belongs to the universal ribosomal protein uS2 family.

The polypeptide is Small ribosomal subunit protein uS2 (Streptococcus thermophilus (strain CNRZ 1066)).